We begin with the raw amino-acid sequence, 150 residues long: UPF0208 membrane protein VV1_2222 (150 aa).

The next 2 helical transmembrane spans lie at 42–62 and 70–90; these read FGIKVMPAIAAISVLTQMAFN and AIVMALFALSLPLQGMWWLGH.

The protein belongs to the UPF0208 family.

The protein resides in the cell inner membrane. This is UPF0208 membrane protein VV1_2222 from Vibrio vulnificus (strain CMCP6).